Reading from the N-terminus, the 200-residue chain is NAD(P)H dehydrogenase (quinone) (200 aa).

Residues 4 to 190 (VLVLYYSTYG…DGARFQGRLV (187 aa)) enclose the Flavodoxin-like domain. FMN contacts are provided by residues 10–15 (STYGHL) and 78–80 (TRF). An NAD(+)-binding site is contributed by Y12. W98 lines the substrate pocket. FMN contacts are provided by residues 113–119 (STATQHG) and H134.

This sequence belongs to the WrbA family. FMN serves as cofactor.

It catalyses the reaction a quinone + NADH + H(+) = a quinol + NAD(+). The catalysed reaction is a quinone + NADPH + H(+) = a quinol + NADP(+). This chain is NAD(P)H dehydrogenase (quinone), found in Acidovorax ebreus (strain TPSY) (Diaphorobacter sp. (strain TPSY)).